Consider the following 270-residue polypeptide: Shikimate dehydrogenase (NADP(+)) (270 aa).

Shikimate is bound by residues 14 to 16 (SLS) and Thr61. Lys65 (proton acceptor) is an active-site residue. Asp77 lines the NADP(+) pocket. Residues Asn86 and Asp101 each contribute to the shikimate site. NADP(+) is bound by residues 125-129 (GNGGA) and Ile210. Tyr212 serves as a coordination point for shikimate. NADP(+) is bound at residue Gly233.

It belongs to the shikimate dehydrogenase family. In terms of assembly, homodimer.

The enzyme catalyses shikimate + NADP(+) = 3-dehydroshikimate + NADPH + H(+). It participates in metabolic intermediate biosynthesis; chorismate biosynthesis; chorismate from D-erythrose 4-phosphate and phosphoenolpyruvate: step 4/7. Functionally, involved in the biosynthesis of the chorismate, which leads to the biosynthesis of aromatic amino acids. Catalyzes the reversible NADPH linked reduction of 3-dehydroshikimate (DHSA) to yield shikimate (SA). This is Shikimate dehydrogenase (NADP(+)) from Clostridium beijerinckii (strain ATCC 51743 / NCIMB 8052) (Clostridium acetobutylicum).